The chain runs to 356 residues: MRRQLRSRRAPAFPYGYRYRLDDQDEMNHNYLADEEEEAEEEAQVMMVPGLEEEEEEEEGKEEEEEREEEEGQGQSTGNAWWRKLQIVNEYLWDPEKRMSLARTGQSRSLILVIYFFFYASLAAVITLFIYMLFLAISPYMPTFTEQVKPPGVMIRPFAHSLNFNFNVSEPETWQRYVISLNGFLQGYNDSLQEEMNIDCPPGQYFIQDGDEDEDKKACQFKRSFLKNCSGLEDPTFGYSTGQPCILLKMNRIVGFRPEFGDPVKVSCKVQKGDENDIRSINYYPESASFDLRYYPYYGKLTHVNYTSPLVAMHFTDVVKNQEVPVQCQLKGKGIVNDVINDRFVGRIIFTLNIET.

At 1-109 (MRRQLRSRRA…SLARTGQSRS (109 aa)) the chain is on the nuclear side. Residues 32–77 (LADEEEEAEEEAQVMMVPGLEEEEEEEEGKEEEEEREEEEGQGQST) form a disordered region. 2 stretches are compositionally biased toward acidic residues: residues 33-43 (ADEEEEAEEEA) and 51-72 (LEEEEEEEEGKEEEEEREEEEG). A helical; Signal-anchor for type II membrane protein transmembrane segment spans residues 110–130 (LILVIYFFFYASLAAVITLFI). Residues 131-356 (YMLFLAISPY…RIIFTLNIET (226 aa)) lie on the Perinuclear space side of the membrane.

Belongs to the X(+)/potassium ATPases subunit beta family. As to quaternary structure, does not associate with known Na,K-ATPase alpha-subunits. Associates with a SMAD7-transcriptional complex. Interacts with SNW1 and TOR1AIP1. Expressed in perinatal myocytes (at protein level). Expressed during postnatal development in skeletal muscle and heart.

Its subcellular location is the nucleus inner membrane. Functionally, may act as a transcriptional coregulator during muscle development through its interaction with SNW1. Has lost its ancestral function as a Na,K-ATPase beta-subunit. The sequence is that of Protein ATP1B4 (Atp1b4) from Rattus norvegicus (Rat).